The chain runs to 492 residues: Phenylalanine--tRNA ligase alpha subunit (492 aa).

L-phenylalanine is bound by residues threonine 335, 374-376 (QLE), and tyrosine 414. Residue glutamate 416 coordinates Mg(2+). L-phenylalanine is bound at residue phenylalanine 439.

It belongs to the class-II aminoacyl-tRNA synthetase family. Phe-tRNA synthetase alpha subunit type 2 subfamily. In terms of assembly, tetramer of two alpha and two beta subunits. Mg(2+) serves as cofactor.

The protein localises to the cytoplasm. The enzyme catalyses tRNA(Phe) + L-phenylalanine + ATP = L-phenylalanyl-tRNA(Phe) + AMP + diphosphate + H(+). The polypeptide is Phenylalanine--tRNA ligase alpha subunit (Methanosarcina acetivorans (strain ATCC 35395 / DSM 2834 / JCM 12185 / C2A)).